Reading from the N-terminus, the 315-residue chain is 4-hydroxy-3-methylbut-2-enyl diphosphate reductase (315 aa).

Cys12 provides a ligand contact to [4Fe-4S] cluster. 2 residues coordinate (2E)-4-hydroxy-3-methylbut-2-enyl diphosphate: His41 and His74. The dimethylallyl diphosphate site is built by His41 and His74. His41 and His74 together coordinate isopentenyl diphosphate. Residue Cys96 participates in [4Fe-4S] cluster binding. His124 lines the (2E)-4-hydroxy-3-methylbut-2-enyl diphosphate pocket. His124 lines the dimethylallyl diphosphate pocket. Residue His124 participates in isopentenyl diphosphate binding. Residue Glu126 is the Proton donor of the active site. Position 168 (Thr168) interacts with (2E)-4-hydroxy-3-methylbut-2-enyl diphosphate. Cys198 contributes to the [4Fe-4S] cluster binding site. Residues Ser226, Ser227, Asn228, and Ser270 each contribute to the (2E)-4-hydroxy-3-methylbut-2-enyl diphosphate site. Dimethylallyl diphosphate is bound by residues Ser226, Ser227, Asn228, and Ser270. Ser226, Ser227, Asn228, and Ser270 together coordinate isopentenyl diphosphate.

It belongs to the IspH family. [4Fe-4S] cluster is required as a cofactor.

The enzyme catalyses isopentenyl diphosphate + 2 oxidized [2Fe-2S]-[ferredoxin] + H2O = (2E)-4-hydroxy-3-methylbut-2-enyl diphosphate + 2 reduced [2Fe-2S]-[ferredoxin] + 2 H(+). It catalyses the reaction dimethylallyl diphosphate + 2 oxidized [2Fe-2S]-[ferredoxin] + H2O = (2E)-4-hydroxy-3-methylbut-2-enyl diphosphate + 2 reduced [2Fe-2S]-[ferredoxin] + 2 H(+). Its pathway is isoprenoid biosynthesis; dimethylallyl diphosphate biosynthesis; dimethylallyl diphosphate from (2E)-4-hydroxy-3-methylbutenyl diphosphate: step 1/1. The protein operates within isoprenoid biosynthesis; isopentenyl diphosphate biosynthesis via DXP pathway; isopentenyl diphosphate from 1-deoxy-D-xylulose 5-phosphate: step 6/6. Its function is as follows. Catalyzes the conversion of 1-hydroxy-2-methyl-2-(E)-butenyl 4-diphosphate (HMBPP) into a mixture of isopentenyl diphosphate (IPP) and dimethylallyl diphosphate (DMAPP). Acts in the terminal step of the DOXP/MEP pathway for isoprenoid precursor biosynthesis. The polypeptide is 4-hydroxy-3-methylbut-2-enyl diphosphate reductase (Pseudomonas syringae pv. tomato (strain ATCC BAA-871 / DC3000)).